We begin with the raw amino-acid sequence, 164 residues long: R-phycoerythrin alpha chain (164 aa).

(2R,3E)-phycoerythrobilin is bound by residues cysteine 82 and cysteine 139.

Belongs to the phycobiliprotein family. As to quaternary structure, heterodimer of an alpha and a beta chain. Contains two covalently linked bilin chromophores.

It is found in the plastid. The protein resides in the chloroplast thylakoid membrane. Functionally, light-harvesting photosynthetic bile pigment-protein from the phycobiliprotein complex. This chain is R-phycoerythrin alpha chain (cpeA), found in Pyropia haitanensis (Red seaweed).